The following is a 97-amino-acid chain: Ice-structuring protein (97 aa).

The signal sequence occupies residues 1-23 (MALSLFTVGQLIFLFWTLRITEA). Residues 24–48 (NPDPAAKAAPAAVADPAAAAAAAVA) constitute a propeptide, removed by a dipeptidylpeptidase.

Belongs to the type-I AFP family. As to expression, detected in blood serum (at protein level).

The protein resides in the secreted. Contributes to protect fish blood from freezing at subzero sea water temperatures. Lowers the blood freezing point. Binds to nascent ice crystals and prevents further growth. This Myzopsetta ferruginea (Yellowtail flounder) protein is Ice-structuring protein.